A 690-amino-acid chain; its full sequence is Crooked neck-like protein 1 (690 aa).

HAT repeat units follow at residues 61–93, 95–127, 129–161, 163–194, 196–227, 229–264, 266–300, 310–342, 344–378, 388–424, 459–491, 493–527, 529–560, 565–606, 608–646, and 648–673; these read DYKL…WEES, KEIQ…MEMK, RQVN…MEEM, GNVA…FELR, KEVE…FEEK, AYFA…FEEN, KEFE…FEKK, IIVS…LVES, AEAD…LWVN, KDPE…FEIR, REFD…LETI, GDIE…FEIE, EETE…FELS, GSVA…EFGT, SDKE…YIFP, and DAAN…EREA. A mediates interaction with HSP90 region spans residues 250-467; the sequence is MDEHLYVAFA…LREFDRCRKL (218 aa). S342 is subject to Phosphoserine. Positions 618 to 626 match the Nuclear localization signal motif; it reads PEKVKKRRK. Basic and acidic residues predominate over residues 667–679; that stretch reads QQQEREAAEQDPD. The segment at 667-690 is disordered; the sequence is QQQEREAAEQDPDKDIDESESSSF. A compositionally biased stretch (acidic residues) spans 680 to 690; that stretch reads KDIDESESSSF. Residue S689 is modified to Phosphoserine.

It belongs to the crooked-neck family. Identified in the spliceosome C complex. Present in a spliceosome complex assembled in vitro containing CRNKL1, HPRP8BP and SNRPB2. Component of the minor spliceosome, which splices U12-type introns. Interacts with PPIL2 (via the PPIase cyclophilin-type domain); they may form a trimeric complex with HSP90.

It is found in the nucleus. The protein localises to the nucleus speckle. Functionally, involved in pre-mRNA splicing process. As a component of the minor spliceosome, involved in the splicing of U12-type introns in pre-mRNAs. This is Crooked neck-like protein 1 (Crnkl1) from Mus musculus (Mouse).